The chain runs to 291 residues: Beta-lactamase CTX-M-8 (291 aa).

Residues 1-30 form the signal peptide; it reads MMRHRVKRMMLMTTACISLLLGSAPLYAQA. Catalysis depends on serine 73, which acts as the Nucleophile; acyl-ester intermediate. The a beta-lactam site is built by lysine 76, serine 133, glutamate 169, and serine 240.

Belongs to the class-A beta-lactamase family. Monomer.

Its subcellular location is the secreted. It catalyses the reaction a beta-lactam + H2O = a substituted beta-amino acid. With respect to regulation, inhibited by the beta-lactamase-blocking agents clavulanic acid, tazobactam and sulbactam; in the DH5alpha strain of E.coli. In terms of biological role, extended-spectrum beta-lactamase (ESBL) which confers resistance to penicillins, as well as first, third and fourth-generation cephalosporins. Has cefotaxime-hydrolyzing activity. Inactive against cephalosporin antibiotic, cefoxitin, and the carbapenem, imipenem. The sequence is that of Beta-lactamase CTX-M-8 from Citrobacter amalonaticus.